A 178-amino-acid chain; its full sequence is ATP-dependent protease subunit HslV (178 aa).

T7 is an active-site residue. Na(+) is bound by residues G162, C165, and T168.

It belongs to the peptidase T1B family. HslV subfamily. As to quaternary structure, a double ring-shaped homohexamer of HslV is capped on each side by a ring-shaped HslU homohexamer. The assembly of the HslU/HslV complex is dependent on binding of ATP.

The protein localises to the cytoplasm. It carries out the reaction ATP-dependent cleavage of peptide bonds with broad specificity.. Allosterically activated by HslU binding. Its function is as follows. Protease subunit of a proteasome-like degradation complex believed to be a general protein degrading machinery. This is ATP-dependent protease subunit HslV from Cupriavidus metallidurans (strain ATCC 43123 / DSM 2839 / NBRC 102507 / CH34) (Ralstonia metallidurans).